Reading from the N-terminus, the 175-residue chain is Protein LAZY 3 (175 aa).

The disordered stretch occupies residues 9–39 (RKLSGKKRVPTSDSSQEPSSPPLSKEVQGLP). The IGT motif signature appears at 44–50 (TFLAIGT).

The protein belongs to the LAZY family. In terms of tissue distribution, specifically expressed in roots. Expressed in root tips of young seedlings.

Functionally, involved in the regulation of root gravitropism. Functions redundantly with LAZY2 and LAZY4 in the control of root gravitropism. Functions redundantly with LAZY1, LAZY2 and LAZY4 to control plant architecture by coupling gravity sensing to the formation of auxin gradients. In Arabidopsis thaliana (Mouse-ear cress), this protein is Protein LAZY 3.